We begin with the raw amino-acid sequence, 301 residues long: GTPase Era (301 aa).

One can recognise an Era-type G domain in the interval 7–175 (YCGFIAIVGR…AAIVRKHLPE (169 aa)). Residues 15–22 (GRPNVGKS) form a G1 region. 15-22 (GRPNVGKS) is a binding site for GTP. Positions 41–45 (QTTRH) are G2. A G3 region spans residues 62–65 (DTPG). Residues 62-66 (DTPGL) and 124-127 (NKVD) each bind GTP. The tract at residues 124 to 127 (NKVD) is G4. Residues 154-156 (ISA) form a G5 region. The 78-residue stretch at 206–283 (LGAELPYSVT…HLELWVKVKS (78 aa)) folds into the KH type-2 domain.

The protein belongs to the TRAFAC class TrmE-Era-EngA-EngB-Septin-like GTPase superfamily. Era GTPase family. Monomer.

It is found in the cytoplasm. The protein localises to the cell inner membrane. Functionally, an essential GTPase that binds both GDP and GTP, with rapid nucleotide exchange. Plays a role in 16S rRNA processing and 30S ribosomal subunit biogenesis and possibly also in cell cycle regulation and energy metabolism. The polypeptide is GTPase Era (Shigella flexneri).